Consider the following 111-residue polypeptide: Prophage-derived-like uncharacterized protein YozM (111 aa).

The first 24 residues, 1–24 (MKKRLIGFLVLVPALIMWGITLIE), serve as a signal peptide directing secretion.

The protein is Prophage-derived-like uncharacterized protein YozM (yozM) of Bacillus subtilis (strain 168).